The sequence spans 152 residues: Aspartate 1-decarboxylase (152 aa).

Ser24 serves as the catalytic Schiff-base intermediate with substrate; via pyruvic acid. Ser24 is modified (pyruvic acid (Ser)). Thr56 is a binding site for substrate. The active-site Proton donor is Tyr57. 72 to 74 (GAA) contributes to the substrate binding site.

Belongs to the PanD family. Heterooctamer of four alpha and four beta subunits. Requires pyruvate as cofactor. In terms of processing, is synthesized initially as an inactive proenzyme, which is activated by self-cleavage at a specific serine bond to produce a beta-subunit with a hydroxyl group at its C-terminus and an alpha-subunit with a pyruvoyl group at its N-terminus.

The protein localises to the cytoplasm. The catalysed reaction is L-aspartate + H(+) = beta-alanine + CO2. Its pathway is cofactor biosynthesis; (R)-pantothenate biosynthesis; beta-alanine from L-aspartate: step 1/1. Functionally, catalyzes the pyruvoyl-dependent decarboxylation of aspartate to produce beta-alanine. This chain is Aspartate 1-decarboxylase, found in Methylobacterium nodulans (strain LMG 21967 / CNCM I-2342 / ORS 2060).